Reading from the N-terminus, the 188-residue chain is MINKIDNIQTDSEIHMKKCIKNFKTNINNIHIGRISPNILNNIRVDYYGISTPLSQVANAIVEDSRTLAITVFDHQLIKSTEKAIFMSDLELIPISYGNTIRVTLPALTEERRHTLIKMVRTEAEKSKIAVRSVRRIANDKTKILLKNKEINEDEEHFFQNEIQKLTNIWIKEIDIILAEKESELMKF.

The protein belongs to the RRF family.

It localises to the cytoplasm. Responsible for the release of ribosomes from messenger RNA at the termination of protein biosynthesis. May increase the efficiency of translation by recycling ribosomes from one round of translation to another. The protein is Ribosome-recycling factor of Blochmanniella pennsylvanica (strain BPEN).